Reading from the N-terminus, the 498-residue chain is 3-octaprenyl-4-hydroxybenzoate carboxy-lyase (498 aa).

Residue asparagine 175 coordinates Mn(2+). Residues 178 to 180 (IYR), 192 to 194 (RWL), and 197 to 198 (RG) each bind prenylated FMN. Glutamate 241 serves as a coordination point for Mn(2+). Catalysis depends on aspartate 290, which acts as the Proton donor.

Belongs to the UbiD family. Homohexamer. Requires prenylated FMN as cofactor. It depends on Mn(2+) as a cofactor.

The protein resides in the cell membrane. The enzyme catalyses a 4-hydroxy-3-(all-trans-polyprenyl)benzoate + H(+) = a 2-(all-trans-polyprenyl)phenol + CO2. The protein operates within cofactor biosynthesis; ubiquinone biosynthesis. Catalyzes the decarboxylation of 3-octaprenyl-4-hydroxy benzoate to 2-octaprenylphenol, an intermediate step in ubiquinone biosynthesis. This Yersinia pestis bv. Antiqua (strain Antiqua) protein is 3-octaprenyl-4-hydroxybenzoate carboxy-lyase.